Consider the following 233-residue polypeptide: 7-cyano-7-deazaguanine synthase (233 aa).

7-17 (CSGGLDSVSLA) contributes to the ATP binding site. Cysteine 185, cysteine 193, cysteine 196, and cysteine 199 together coordinate Zn(2+).

This sequence belongs to the QueC family. It depends on Zn(2+) as a cofactor.

It carries out the reaction 7-carboxy-7-deazaguanine + NH4(+) + ATP = 7-cyano-7-deazaguanine + ADP + phosphate + H2O + H(+). It functions in the pathway purine metabolism; 7-cyano-7-deazaguanine biosynthesis. In terms of biological role, catalyzes the ATP-dependent conversion of 7-carboxy-7-deazaguanine (CDG) to 7-cyano-7-deazaguanine (preQ(0)). This Paracoccus denitrificans (strain Pd 1222) protein is 7-cyano-7-deazaguanine synthase.